We begin with the raw amino-acid sequence, 252 residues long: Phosphoglycolate phosphatase (252 aa).

The Nucleophile role is filled by aspartate 13. Mg(2+) is bound by residues aspartate 13, aspartate 15, and aspartate 192.

The protein belongs to the HAD-like hydrolase superfamily. CbbY/CbbZ/Gph/YieH family. As to quaternary structure, monomer. Mg(2+) serves as cofactor. It depends on chloride as a cofactor.

The enzyme catalyses 2-phosphoglycolate + H2O = glycolate + phosphate. It participates in organic acid metabolism; glycolate biosynthesis; glycolate from 2-phosphoglycolate: step 1/1. Specifically catalyzes the dephosphorylation of 2-phosphoglycolate. Is involved in the dissimilation of the intracellular 2-phosphoglycolate formed during the DNA repair of 3'-phosphoglycolate ends, a major class of DNA lesions induced by oxidative stress. The protein is Phosphoglycolate phosphatase of Salmonella typhimurium (strain LT2 / SGSC1412 / ATCC 700720).